The primary structure comprises 553 residues: Serine/threonine-protein kinase WNG2 (553 aa).

Disordered regions lie at residues 1-20 (MMFP…RLQR) and 88-107 (NREP…GGAE). Positions 1–64 (MMFPAVAAPP…GLSWVSVAVA (64 aa)) are cleaved as a signal peptide. Residues 125 to 395 (FKQLRPVDEF…IGEVMEDPFF (271 aa)) enclose the Protein kinase domain. Residue Lys186 participates in ATP binding. Asp278 (proton acceptor) is an active-site residue. Positions 432–553 (REKADAAAKA…GFNKEDAQES (122 aa)) are disordered. Residues 438-451 (AAKAADNAEVPAAK) are compositionally biased toward low complexity. Basic and acidic residues-rich tracts occupy residues 465–486 (GDRD…EKGR), 494–524 (EGNH…ENRE), and 531–553 (QREE…AQES).

The protein belongs to the protein kinase superfamily. STE Ser/Thr protein kinase family. WNG subfamily. The cofactor is Mg(2+).

The protein resides in the cytoplasmic granule. It is found in the secreted. It localises to the parasitophorous vacuole lumen. The enzyme catalyses L-seryl-[protein] + ATP = O-phospho-L-seryl-[protein] + ADP + H(+). It carries out the reaction L-threonyl-[protein] + ATP = O-phospho-L-threonyl-[protein] + ADP + H(+). Probable serine/threonine-protein kinase. This Toxoplasma gondii protein is Serine/threonine-protein kinase WNG2.